A 507-amino-acid chain; its full sequence is Cytochrome P450 monooxygenase nodZ (507 aa).

A run of 2 helical transmembrane segments spans residues 1-21 and 205-225; these read MITA…FSLL and GFLH…PWFL. Residue N352 is glycosylated (N-linked (GlcNAc...) asparagine). C445 is a binding site for heme.

The protein belongs to the cytochrome P450 family. The cofactor is heme.

It is found in the membrane. It participates in secondary metabolite biosynthesis. Functionally, cytochrome P450 monooxygenase; part of the gene cluster that mediates the biosynthesis of the indole diterpenes nodulisporic acids (NA). Nodulisporic acid A (NAA) and its chemically modified derivatives are of particular significance because of their highly potent insecticidal activity against blood-feeding arthropods and lack of observable adverse effects on mammals, in particular the tremogenicity associated with the paspaline-derived IDTs is not observed. The geranylgeranyl diphosphate (GGPP) synthase ggs1, localized outside of the cluster, is proposed to catalyze the first step in nodulisporic acid biosynthesis via conversion of farnesyl pyrophosphate and isopentyl pyrophosphate into geranylgeranyl pyrophosphate (GGPP). Condensation of indole-3-glycerol phosphate with GGPP by the prenyl transferase nodC then forms 3-geranylgeranylindole (3-GGI). Epoxidation by the FAD-dependent monooxygenase nodM leads to a single-epoxidized-GGI that is substrate of the terpene cyclase nodB for cyclization to yield emindole SB. The terminal methyl carbon, C28, of emindole SB is then oxidized by the cytochrome P450 monooxygenase nodW to produce nodulisporic acid F (NAF), the pentacyclic core of NAA. NAF is converted to nodulisporic acid E (NAE) via prenylation. This step is probably performed by one of the indole diterpene prenyltransferases nodD1 or nodD2. Several oxidation steps performed by the FAD-linked oxidoreductase nodO and one of the cytochrome P450 monooxygenase nodR, nodX or nodZ further convert NAE to nodulisporic acid D (NAD). NAD is substrate of cytochrome P450 monooxygenase nodJ to produce the precursor of nodulisporic acid C (NAC), converted to NAC by one of the indole diterpene prenyltransferases nodD1 or nodD2. The FAD-dependent monooxygenase nodY2 then oxidizes NAC to nodulisporic acid B (NAB). Finally NAB is converted to NAA by one of the cytochrome P450 monooxygenases nodR, nodX or nodZ. This chain is Cytochrome P450 monooxygenase nodZ, found in Hypoxylon pulicicidum.